Consider the following 499-residue polypeptide: UDP-N-acetylmuramoylalanine--D-glutamate ligase (499 aa).

Residue 120-126 coordinates ATP; it reads GTNGKTT.

The protein belongs to the MurCDEF family.

The protein resides in the cytoplasm. The catalysed reaction is UDP-N-acetyl-alpha-D-muramoyl-L-alanine + D-glutamate + ATP = UDP-N-acetyl-alpha-D-muramoyl-L-alanyl-D-glutamate + ADP + phosphate + H(+). The protein operates within cell wall biogenesis; peptidoglycan biosynthesis. Functionally, cell wall formation. Catalyzes the addition of glutamate to the nucleotide precursor UDP-N-acetylmuramoyl-L-alanine (UMA). This Nostoc punctiforme (strain ATCC 29133 / PCC 73102) protein is UDP-N-acetylmuramoylalanine--D-glutamate ligase.